The chain runs to 548 residues: uncharacterized protein (548 aa).

Residues 8–200 enclose the DhaL domain; the sequence is KLFADMIIQG…LLCVYEGFLK (193 aa).

This is an uncharacterized protein from Staphylococcus aureus (strain bovine RF122 / ET3-1).